The primary structure comprises 832 residues: Ventricular zone-expressed PH domain-containing protein homolog 1 (832 aa).

Residues 201–319 (AELLALMSQL…RYLVSQLANM (119 aa)) are interaction with TGFBR1. The tract at residues 497–519 (DTHGSQLRNSSASHPSIIHSEPE) is disordered. Over residues 499–510 (HGSQLRNSSASH) the composition is skewed to polar residues. The segment at 663 to 832 (ESTFPQQKDL…RESREVTTYL (170 aa)) is interaction with TGFBR1. The region spanning 716-818 (QPLIEGKLKE…WLQCINVALA (103 aa)) is the PH domain.

It belongs to the MELT/VEPH family. As to quaternary structure, interacts with TGFBR1.

Its subcellular location is the cell membrane. Functionally, interacts with TGF-beta receptor type-1 (TGFBR1) and inhibits dissociation of activated SMAD2 from TGFBR1, impeding its nuclear accumulation and resulting in impaired TGF-beta signaling. May also affect FOXO, Hippo and Wnt signaling. The sequence is that of Ventricular zone-expressed PH domain-containing protein homolog 1 (Veph1) from Rattus norvegicus (Rat).